We begin with the raw amino-acid sequence, 139 residues long: MTARWPDPDRAYIGRYVASLDLRSIKSRTCYRQVLHGFQDVVERHEALDQQVLLAWLRQSSDRWAATTLLHRTRIIDRFLDHFLEAAAIDHNPVEDLREACHIKQCMPVWRALISCDPEQALAQLRQPEPFGSAGRDHG.

This is an uncharacterized protein from Sinorhizobium fredii (strain NBRC 101917 / NGR234).